Here is a 220-residue protein sequence, read N- to C-terminus: MMTALSCHGGCMDTHQLDAAEVRVLGALLEKQALTPDAYPLTLNALVGACNQLTSREPVMQLSESDASAALDALIAKKLVAERLPAGSRVAKYEHRLNYEWNIDGARLAALCLLTLRGPQTSAEIRARAGRIYSFSGVDEVETALNALADKYPPLAAKLERQPGEREARWCHLLSGEPQILPAQACEVIDVGLTGRVAALEAEVSALKAMVLALEQRLNG.

Belongs to the UPF0502 family.

In Chromobacterium violaceum (strain ATCC 12472 / DSM 30191 / JCM 1249 / CCUG 213 / NBRC 12614 / NCIMB 9131 / NCTC 9757 / MK), this protein is UPF0502 protein CV_4303.